The chain runs to 396 residues: Phosphoglycerate kinase (396 aa).

Substrate-binding positions include 20–22, R35, 58–61, R115, and R155; these read DIN and HQGR. Residues E328 and 353 to 356 each bind ATP; that span reads GGDT.

The protein belongs to the phosphoglycerate kinase family. Monomer.

It is found in the cytoplasm. The catalysed reaction is (2R)-3-phosphoglycerate + ATP = (2R)-3-phospho-glyceroyl phosphate + ADP. The protein operates within carbohydrate degradation; glycolysis; pyruvate from D-glyceraldehyde 3-phosphate: step 2/5. The protein is Phosphoglycerate kinase of Natronomonas pharaonis (strain ATCC 35678 / DSM 2160 / CIP 103997 / JCM 8858 / NBRC 14720 / NCIMB 2260 / Gabara) (Halobacterium pharaonis).